A 697-amino-acid polypeptide reads, in one-letter code: tRNA 5-methylaminomethyl-2-thiouridine biosynthesis bifunctional protein MnmC (697 aa).

Residues 1-275 (MTAKPHKSCQ…KPATLAAIDH (275 aa)) are tRNA (mnm(5)s(2)U34)-methyltransferase. Positions 280–697 (VGGGLASANL…LRKLLKGKAL (418 aa)) are FAD-dependent cmnm(5)s(2)U34 oxidoreductase.

The protein in the N-terminal section; belongs to the methyltransferase superfamily. tRNA (mnm(5)s(2)U34)-methyltransferase family. This sequence in the C-terminal section; belongs to the DAO family. FAD is required as a cofactor.

The protein resides in the cytoplasm. It catalyses the reaction 5-aminomethyl-2-thiouridine(34) in tRNA + S-adenosyl-L-methionine = 5-methylaminomethyl-2-thiouridine(34) in tRNA + S-adenosyl-L-homocysteine + H(+). Functionally, catalyzes the last two steps in the biosynthesis of 5-methylaminomethyl-2-thiouridine (mnm(5)s(2)U) at the wobble position (U34) in tRNA. Catalyzes the FAD-dependent demodification of cmnm(5)s(2)U34 to nm(5)s(2)U34, followed by the transfer of a methyl group from S-adenosyl-L-methionine to nm(5)s(2)U34, to form mnm(5)s(2)U34. The sequence is that of tRNA 5-methylaminomethyl-2-thiouridine biosynthesis bifunctional protein MnmC from Shewanella sp. (strain ANA-3).